The chain runs to 145 residues: Superoxide dismutase [Cu-Zn] (145 aa).

3 residues coordinate Cu cation: histidine 37, histidine 39, and histidine 54. The cysteines at positions 48 and 137 are disulfide-linked. Residues histidine 54, histidine 62, histidine 71, and aspartate 74 each coordinate Zn(2+). Histidine 111 provides a ligand contact to Cu cation.

The protein belongs to the Cu-Zn superoxide dismutase family. Homodimer. Cu cation serves as cofactor. Zn(2+) is required as a cofactor.

The protein localises to the cytoplasm. It carries out the reaction 2 superoxide + 2 H(+) = H2O2 + O2. In terms of biological role, destroys radicals which are normally produced within the cells and which are toxic to biological systems. The protein is Superoxide dismutase [Cu-Zn] of Drosophila busckii (Fruit fly).